The following is a 2299-amino-acid chain: Acetyl-CoA carboxylase dmxL1 (2299 aa).

Over residues 21 to 39 the composition is skewed to low complexity; the sequence is TSIPASVPASAPPSSSAPH. The disordered stretch occupies residues 21-41; the sequence is TSIPASVPASAPPSSSAPHAA. Residues 75–583 enclose the Biotin carboxylation domain; it reads VITNVLIANN…TTGWLDELIT (509 aa). The ATP-grasp 1 domain occupies 227 to 424; the sequence is QVAIDADGIV…LPAAQLQIAM (198 aa). An ATP-binding site is contributed by 258–315; it reads AKEIGFPVMIKASEGGGGKGIRKCEQEEGFEALYNAASSEIPGSPIFIMKLAGNARHL. Mg(2+)-binding residues include E381, E395, and N397. Positions 381, 395, and 397 each coordinate Mn(2+). Residues 710-784 form the Biotinyl-binding domain; the sequence is LEQENDPTQL…EPGDVLGILT (75 aa). K751 carries the N6-biotinyllysine modification. Residues 1159–1208 are disordered; the sequence is DMEMSSQLSTPSTPATPPTPPYENGKQSKGVGSISDMSNLIENPDKEPTR. One can recognise a CoA carboxyltransferase N-terminal domain in the interval 1539 to 1887; that stretch reads PTKALEWLQP…KKNTLVPIGP (349 aa). The 315-residue stretch at 1891–2205 folds into the CoA carboxyltransferase C-terminal domain; it reads PWDRDIVCSP…EEHILKRIAT (315 aa).

Biotin is required as a cofactor. Mg(2+) serves as cofactor. The cofactor is Mn(2+).

It catalyses the reaction hydrogencarbonate + acetyl-CoA + ATP = malonyl-CoA + ADP + phosphate + H(+). It carries out the reaction N(6)-biotinyl-L-lysyl-[protein] + hydrogencarbonate + ATP = N(6)-carboxybiotinyl-L-lysyl-[protein] + ADP + phosphate + H(+). The protein operates within secondary metabolite biosynthesis. Its pathway is lipid metabolism; malonyl-CoA biosynthesis; malonyl-CoA from acetyl-CoA: step 1/1. In terms of biological role, acetyl-CoA carboxylase; part of the gene cluster that mediates the biosynthesis of the dimeric xanthones cryptosporioptides. The pathway begins with the synthesis of atrochrysone thioester by the polyketide synthase dmx-nrPKS. The atrochrysone carboxyl ACP thioesterase dmxR1 then breaks the thioester bond and releases the atrochrysone carboxylic acid from dmx-nrPKS. Atrochrysone carboxylic acid is decarboxylated by the decarboxylase dmxR15, and oxidized by the anthrone oxygenase dmxR16 to yield emodin. Emodin is then reduced to emodin hydroquinone by the oxidoreductase dmxR7. A-ring reduction by the short chain dehydrogenase dmxR18, dehydration by the scytalone dehydratase-like protein dmxR17 and probable spontaneous re-oxidation, results in overall deoxygenation to chrysophanol. Baeyer-Villiger oxidation by the Baeyer-Villiger monooxygenase (BVMO) dmxR6 then yields monodictylactone in equilibrium with monodictyphenone. In the case of the cryptosporioptides biosynthesis, monodictylactone is reduced at C-12 to an alcohol (by the short chain dehydrogenases dmxR12 or dmxR8) and hydroxylated at C-5 by dmxR9, yielding the electron-rich aromatic which could eliminate H(2)O to form the ortho-quinonemethide, followed by tautomerisation to paraquinone and complete the formal reduction to produce the 10-methylgroup. Conjugate addition of C-4a-OH to the resulting paraquinone by the monooxygenase dmxR10 then gives cyclohexadienone, which is then reduced at C-5 by the short chain dehydrogenase dmxR3 to give the dihydroxanthone. The 6,7-epoxide in the cryptosporioptides could be introduced by the cytochrome P450 monooxygenase dmxL3. The highly reducing PKS dmxL2 manufactures butyrate, which is further carboxylated by dmxL1 to form ethylmalonate. It is not yet clear whether the carboxylation occurs while the butyrate is attached to the ACP of dmxL2, but this unusual fungal metabolite could then be esterified to O-5 by the O-acetyltransferase dmxR13. Finally, dimerization performed by dmxR5 gives the observed dimers cryptosporioptides A, B and C as the final products of the pathway. This Cryptosporiopsis sp. (strain 8999) protein is Acetyl-CoA carboxylase dmxL1.